A 226-amino-acid chain; its full sequence is Large ribosomal subunit protein uL1 (226 aa).

It belongs to the universal ribosomal protein uL1 family. Part of the 50S ribosomal subunit.

In terms of biological role, binds directly to 23S rRNA. The L1 stalk is quite mobile in the ribosome, and is involved in E site tRNA release. Functionally, protein L1 is also a translational repressor protein, it controls the translation of the L11 operon by binding to its mRNA. This chain is Large ribosomal subunit protein uL1, found in Borrelia garinii subsp. bavariensis (strain ATCC BAA-2496 / DSM 23469 / PBi) (Borreliella bavariensis).